Here is a 123-residue protein sequence, read N- to C-terminus: uncharacterized protein (123 aa).

This sequence to M.tuberculosis Rv0477.

This is an uncharacterized protein from Mycobacterium leprae (strain TN).